Here is a 230-residue protein sequence, read N- to C-terminus: Ureidoacrylate amidohydrolase RutB (230 aa).

Catalysis depends on Asp-24, which acts as the Proton acceptor. Lys-133 is an active-site residue. Residue Cys-166 is the Nucleophile of the active site.

It belongs to the isochorismatase family. RutB subfamily.

The enzyme catalyses (Z)-3-ureidoacrylate + H2O + H(+) = (Z)-3-aminoacrylate + NH4(+) + CO2. It catalyses the reaction (Z)-3-ureidoacrylate + H2O = (Z)-3-aminoacrylate + carbamate + H(+). It carries out the reaction (Z)-2-methylureidoacrylate + H2O + H(+) = (Z)-2-methylaminoacrylate + NH4(+) + CO2. In terms of biological role, hydrolyzes ureidoacrylate to form aminoacrylate and carbamate. The carbamate hydrolyzes spontaneously, thereby releasing one of the nitrogen atoms of the pyrimidine ring as ammonia and one of its carbon atoms as CO2. In Escherichia coli O6:K15:H31 (strain 536 / UPEC), this protein is Ureidoacrylate amidohydrolase RutB.